Here is a 296-residue protein sequence, read N- to C-terminus: 33 kDa chaperonin (296 aa).

2 cysteine pairs are disulfide-bonded: Cys-233–Cys-235 and Cys-267–Cys-270.

This sequence belongs to the HSP33 family. Post-translationally, under oxidizing conditions two disulfide bonds are formed involving the reactive cysteines. Under reducing conditions zinc is bound to the reactive cysteines and the protein is inactive.

It is found in the cytoplasm. In terms of biological role, redox regulated molecular chaperone. Protects both thermally unfolding and oxidatively damaged proteins from irreversible aggregation. Plays an important role in the bacterial defense system toward oxidative stress. This is 33 kDa chaperonin from Actinobacillus pleuropneumoniae serotype 7 (strain AP76).